Consider the following 183-residue polypeptide: Ribosome maturation factor RimM (183 aa).

One can recognise a PRC barrel domain in the interval 104 to 183 (EGDYYWKDLM…TIEVDWDPGF (80 aa)).

This sequence belongs to the RimM family. As to quaternary structure, binds ribosomal protein uS19.

It is found in the cytoplasm. In terms of biological role, an accessory protein needed during the final step in the assembly of 30S ribosomal subunit, possibly for assembly of the head region. Essential for efficient processing of 16S rRNA. May be needed both before and after RbfA during the maturation of 16S rRNA. It has affinity for free ribosomal 30S subunits but not for 70S ribosomes. This Salmonella arizonae (strain ATCC BAA-731 / CDC346-86 / RSK2980) protein is Ribosome maturation factor RimM.